The primary structure comprises 740 residues: MAPSFDTLSEQDLHEEEEEEIDFSDLKAQYEVKLEEGLDTFVVIDGLPVVPEESRQKLIKFLLRKLNTVGHTSEDAVFMPLNDKNMSEGYAFVEFETPEQAVAAVKQLHGTPLDKKHTLLVNKLMDIERYGREGRIDEEYKPPAIEPFKEKEHLRSWLADPNARDQFALHRGDKVGVFWNNKNNPPENVVDRAHWTQLFAQWSPKGTYLASVHPQGVQLWGGPAFSKQKQFPHPFVQLIEFSPGESYLTTWSARPIQVEEGQSILTYEEEGKNIIVWDIATGKPLRSFVSHDLTAGPAGDAEPKKKVQWPAFKWSADEKYVARMLQHQSISIYELPRMNLLGKTSVKIDGVMDFEWSPATVTREGVKQYEQLLCFWTPEIGSSPARVAMMSVPSKEIVRTRNLFNVSDVKLHWQSQGSYVCVKVDRHSKSKKSMATNLEIFRVREKGVPVEVVDSLKDTVINFAWEPNGNRFVLITTGEAVAGAAVAPKTAVSFFAPEKKGGAIGNFKLIRTIEKKNSNAIYWSPKGRFVVVATVHSQTSFDMDFWDMDFEGEKPEAEKDFAANLQLMKTIEHYGVTDIDWDPTGRYVVSSASVWTHQLENGWNMHTFAGQTLSENPTDKFKQFLWRPRPPTLLSKEEQKQVRKNLREYSKEFDEEDRYAVDIANTAVVEKRKRVLNEWVAWIRREKELLAEEKDAYGLPEEADDPKLAKDAAATTQEQGETVVEEIVEEIIEESEEVIG.

Residues 1–10 (MAPSFDTLSE) show a composition bias toward polar residues. The disordered stretch occupies residues 1-20 (MAPSFDTLSEQDLHEEEEEE). Residues 40–126 (TFVVIDGLPV…HTLLVNKLMD (87 aa)) enclose the RRM domain. 6 WD repeats span residues 193-230 (AHWTQLFAQWSPKGTYLASVHPQGVQLWGGPAFSKQKQ), 232-289 (PHPF…RSFV), 302-343 (EPKK…LLGK), 455-496 (SLKD…SFFA), 513-556 (IEKK…EKPE), and 571-609 (IEHYGVTDIDWDPTGRYVVSSASVWTHQLENGWNMHTFA). The tract at residues 695 to 721 (DAYGLPEEADDPKLAKDAAATTQEQGE) is disordered.

It belongs to the eIF-3 subunit B family. In terms of assembly, component of the eukaryotic translation initiation factor 3 (eIF-3) complex.

The protein resides in the cytoplasm. RNA-binding component of the eukaryotic translation initiation factor 3 (eIF-3) complex, which is involved in protein synthesis of a specialized repertoire of mRNAs and, together with other initiation factors, stimulates binding of mRNA and methionyl-tRNAi to the 40S ribosome. The eIF-3 complex specifically targets and initiates translation of a subset of mRNAs involved in cell proliferation. The polypeptide is Eukaryotic translation initiation factor 3 subunit B (prt1) (Neosartorya fischeri (strain ATCC 1020 / DSM 3700 / CBS 544.65 / FGSC A1164 / JCM 1740 / NRRL 181 / WB 181) (Aspergillus fischerianus)).